The primary structure comprises 856 residues: Protein translocase subunit SecA (856 aa).

ATP-binding positions include Gln-77, 95-99, and Asp-534; that span reads GEGKT.

This sequence belongs to the SecA family. In terms of assembly, monomer and homodimer. Part of the essential Sec protein translocation apparatus which comprises SecA, SecYEG and auxiliary proteins SecDF. Other proteins may also be involved.

The protein resides in the cell inner membrane. It localises to the cytoplasm. It catalyses the reaction ATP + H2O + cellular proteinSide 1 = ADP + phosphate + cellular proteinSide 2.. Its function is as follows. Part of the Sec protein translocase complex. Interacts with the SecYEG preprotein conducting channel. Has a central role in coupling the hydrolysis of ATP to the transfer of proteins into and across the cell membrane, serving as an ATP-driven molecular motor driving the stepwise translocation of polypeptide chains across the membrane. This is Protein translocase subunit SecA from Thermosipho africanus (strain TCF52B).